A 214-amino-acid chain; its full sequence is Adenylate kinase (214 aa).

Position 10–15 (10–15 (GAGKGT)) interacts with ATP. An NMP region spans residues 30–59 (STGDLLREEIANNTELGKQAKKLIDGGNLV). AMP contacts are provided by residues threonine 31, arginine 36, 57-59 (NLV), 83-86 (GFPR), and glutamine 90. Positions 124–161 (LRRQCKNCGNIFNLRFIKNFDGKCPKCGSTDIYQRADD) are LID. Arginine 125 provides a ligand contact to ATP. Zn(2+) contacts are provided by cysteine 128 and cysteine 131. 134 to 135 (IF) is an ATP binding site. Zn(2+) is bound by residues cysteine 147 and cysteine 150. AMP is bound by residues arginine 158 and arginine 169. Lysine 197 contributes to the ATP binding site.

This sequence belongs to the adenylate kinase family. In terms of assembly, monomer.

The protein resides in the cytoplasm. It catalyses the reaction AMP + ATP = 2 ADP. It functions in the pathway purine metabolism; AMP biosynthesis via salvage pathway; AMP from ADP: step 1/1. Functionally, catalyzes the reversible transfer of the terminal phosphate group between ATP and AMP. Plays an important role in cellular energy homeostasis and in adenine nucleotide metabolism. This is Adenylate kinase from Elusimicrobium minutum (strain Pei191).